Reading from the N-terminus, the 607-residue chain is NAD-dependent protein deacetylase sir-2.1 (607 aa).

Residues 1–68 (MSRDSGNDSE…SVSSESWQNN (68 aa)) form a disordered region. A compositionally biased stretch (low complexity) spans 55–64 (ESTTSVSSES). The Deacetylase sirtuin-type domain maps to 128 to 401 (KLTNYNSLAD…DSIMEQQGKT (274 aa)). NAD(+)-binding positions include 153–172 (GAGV…DGIY) and 237–240 (QNID). The Proton acceptor role is filled by His255. Zn(2+) contacts are provided by Cys263, Cys266, Cys287, and Cys290. Residues 327-329 (GSS), 352-354 (NRE), and Cys369 each bind NAD(+). The interval 426–453 (EKRNDDSSDEPTLKKPRMSVADDSMDSE) is disordered.

Belongs to the sirtuin family. Class I subfamily. In terms of assembly, interacts with ftt-2 and par-5. Interacts with daf-16 following heat-shock, which causes daf-16 to accumulate in the nucleus. Interaction with daf-16 is promoted by ftt-2. Interacts with transcriptional coregulator hcf-1. Requires Zn(2+) as cofactor.

It localises to the nucleus. The protein resides in the cytoplasm. The catalysed reaction is N(6)-acetyl-L-lysyl-[protein] + NAD(+) + H2O = 2''-O-acetyl-ADP-D-ribose + nicotinamide + L-lysyl-[protein]. NAD-dependent deacetylase. Involved in metabolism, apoptosis, response to oxidative stress, response to DNA damage, and determination of lifespan. Required for a reduction of the 'Lys-16' acetylation of histone H4 (H4K16ac) on dosage-compensated X chromosomes in hermaphrodites. Plays a role in germ cell and somatic cell apoptosis in response to DNA damage. Functions upstream of daf-16/Forkhead box protein O in the Insulin/IGF-1-like signaling (IIS) mediated pathway, promoting daf-16 mediated transcriptional activation and increased lifespan. May also regulate lifespan independently of daf-16 by modulating the transcription of genes involved in the stress response of the endoplasmic reticulum (ER). Functions upstream of transcriptional coregulator hcf-1, perhaps acting independently of the IIS mediated pathway, to modulate lifespan and oxidative stress response. Acts upstream of the nicotinic acid metabolism pathway, which may be linked to the regulation of longevity. Plays a role in ascaroside-mediated longevity and stress resistance. The chain is NAD-dependent protein deacetylase sir-2.1 from Caenorhabditis elegans.